We begin with the raw amino-acid sequence, 140 residues long: Early nodulin-like protein 22 (140 aa).

Positions 1 to 28 (MAQSSGHVSYVAVTVPIAIVMTVLCLFL) are cleaved as a signal peptide. The region spanning 39–138 (TTYIVGGDDG…GLKMAIKALA (100 aa)) is the Phytocyanin domain. N-linked (GlcNAc...) asparagine glycosylation occurs at asparagine 85. A disulfide bridge links cysteine 92 with cysteine 126.

This sequence belongs to the early nodulin-like (ENODL) family.

May act as a carbohydrate transporter. The polypeptide is Early nodulin-like protein 22 (Arabidopsis thaliana (Mouse-ear cress)).